A 570-amino-acid chain; its full sequence is Proline--tRNA ligase (570 aa).

The protein belongs to the class-II aminoacyl-tRNA synthetase family. ProS type 1 subfamily. Homodimer.

It localises to the cytoplasm. The catalysed reaction is tRNA(Pro) + L-proline + ATP = L-prolyl-tRNA(Pro) + AMP + diphosphate. In terms of biological role, catalyzes the attachment of proline to tRNA(Pro) in a two-step reaction: proline is first activated by ATP to form Pro-AMP and then transferred to the acceptor end of tRNA(Pro). As ProRS can inadvertently accommodate and process non-cognate amino acids such as alanine and cysteine, to avoid such errors it has two additional distinct editing activities against alanine. One activity is designated as 'pretransfer' editing and involves the tRNA(Pro)-independent hydrolysis of activated Ala-AMP. The other activity is designated 'posttransfer' editing and involves deacylation of mischarged Ala-tRNA(Pro). The misacylated Cys-tRNA(Pro) is not edited by ProRS. This chain is Proline--tRNA ligase, found in Thermoanaerobacter sp. (strain X514).